A 155-amino-acid polypeptide reads, in one-letter code: Myosin light chain alkali (155 aa).

2 consecutive EF-hand domains span residues 7-41 (REVE…LNLN) and 80-115 (GCYE…LGES).

In terms of assembly, myosin is a hexamer of 2 heavy chains and 4 light chains.

In Drosophila simulans (Fruit fly), this protein is Myosin light chain alkali (Mlc1).